A 173-amino-acid chain; its full sequence is NADH-ubiquinone oxidoreductase chain 6 (173 aa).

5 helical membrane-spanning segments follow: residues 1-21 (MTYF…AVAS), 27-47 (YGVV…MSLG), 48-68 (MSFV…VVFV), 87-107 (VVGY…VGGL), and 139-159 (CGVG…FVVL).

Belongs to the complex I subunit 6 family.

It localises to the mitochondrion membrane. The catalysed reaction is a ubiquinone + NADH + 5 H(+)(in) = a ubiquinol + NAD(+) + 4 H(+)(out). Its function is as follows. Core subunit of the mitochondrial membrane respiratory chain NADH dehydrogenase (Complex I) that is believed to belong to the minimal assembly required for catalysis. Complex I functions in the transfer of electrons from NADH to the respiratory chain. The immediate electron acceptor for the enzyme is believed to be ubiquinone. The chain is NADH-ubiquinone oxidoreductase chain 6 (MT-ND6) from Synthliboramphus antiquus (Ancient murrelet).